Consider the following 61-residue polypeptide: Transmembrane protein 300R (61 aa).

Transmembrane regions (helical) follow at residues 5–25 (FLDLYMILSVLAGVIGIFYLT) and 35–55 (SLSYYMTLSVVTGILALIYLQ).

Its subcellular location is the membrane. The chain is Transmembrane protein 300R from Invertebrate iridescent virus 6 (IIV-6).